The following is a 178-amino-acid chain: M-phase-specific PLK1-interacting protein (178 aa).

A compositionally biased stretch (pro residues) spans 1-15; sequence MHRPNFRPPTPPYPS. The tract at residues 1–134 is disordered; the sequence is MHRPNFRPPT…RGREKRMSNE (134 aa). Residues 17 to 34 show a composition bias toward gly residues; it reads GIGGWGGGNNFRGALGGG. The residue at position 36 (Arg36) is an Asymmetric dimethylarginine. A phosphoserine mark is found at Ser39 and Ser46. Position 50 is a phosphothreonine (Thr50). Arg56 is modified (omega-N-methylarginine). Asymmetric dimethylarginine is present on residues Arg58, Arg67, and Arg76. Residues 78-96 show a composition bias toward low complexity; the sequence is GSPSPGGYPGSYSRSPAGS. 5 positions are modified to phosphoserine: Ser79, Ser81, Ser92, Ser103, and Ser114. Over residues 97–121 the composition is skewed to polar residues; sequence QHQFGYSPGQQQTYPQGSPRTSTPF. Arg116 is subject to Omega-N-methylarginine. Phosphothreonine is present on Thr119. Phosphoserine occurs at positions 123 and 132.

Interacts with PLK1; phosphorylation-dependent. In terms of processing, phosphorylated during mitosis in the cell cycle probably by CDK1.

It is found in the nucleus. The protein localises to the cytoplasm. The protein resides in the cytoskeleton. It localises to the microtubule organizing center. Its subcellular location is the centrosome. In terms of biological role, may play a role in maintenance of cell cycle integrity by regulating mitosis or cytokinesis. The polypeptide is M-phase-specific PLK1-interacting protein (Mplkip) (Mus musculus (Mouse)).